The primary structure comprises 149 residues: Small ribosomal subunit protein uS19 (149 aa).

It belongs to the universal ribosomal protein uS19 family.

In terms of biological role, protein S19 forms a complex with S13 that binds strongly to the 16S ribosomal RNA. This chain is Small ribosomal subunit protein uS19, found in Methanopyrus kandleri (strain AV19 / DSM 6324 / JCM 9639 / NBRC 100938).